A 693-amino-acid chain; its full sequence is Elongation factor G (693 aa).

A tr-type G domain is found at 8-282; that stretch reads EKTRNIGIMA…AVIDYLPSPL (275 aa). Residues 17-24, 81-85, and 135-138 contribute to the GTP site; these read AHVDAGKT, DTPGH, and NKMD.

This sequence belongs to the TRAFAC class translation factor GTPase superfamily. Classic translation factor GTPase family. EF-G/EF-2 subfamily.

The protein localises to the cytoplasm. Its function is as follows. Catalyzes the GTP-dependent ribosomal translocation step during translation elongation. During this step, the ribosome changes from the pre-translocational (PRE) to the post-translocational (POST) state as the newly formed A-site-bound peptidyl-tRNA and P-site-bound deacylated tRNA move to the P and E sites, respectively. Catalyzes the coordinated movement of the two tRNA molecules, the mRNA and conformational changes in the ribosome. The sequence is that of Elongation factor G from Streptococcus pneumoniae (strain CGSP14).